The chain runs to 126 residues: Glycine cleavage system H protein (126 aa).

Residues 22–104 (TVTIGVTDFA…YGEGWMIKIK (83 aa)) enclose the Lipoyl-binding domain. At Lys-63 the chain carries N6-lipoyllysine.

Belongs to the GcvH family. The glycine cleavage system is composed of four proteins: P, T, L and H. The cofactor is (R)-lipoate.

In terms of biological role, the glycine cleavage system catalyzes the degradation of glycine. The H protein shuttles the methylamine group of glycine from the P protein to the T protein. This chain is Glycine cleavage system H protein, found in Christiangramia forsetii (strain DSM 17595 / CGMCC 1.15422 / KT0803) (Gramella forsetii).